The following is a 344-amino-acid chain: MKFLDQAKVYVRSGDGGAGCVSFRREKFIEFGGPDGGDGGRGGDVWIECVDGLNTLIDYRYQQHFKAKKGDHGKGANRTGARGSDVVLRVPAGTQILDETEETVLADLTEVGQRIKLLEGGNGGFGNAQFKTSTNQAPRRANPGLEGQERWIWLRLKLIADAGLVGLPNAGKSTFLAATTAAKPKIADYPFTTLHPGLGVVRVDGREFVLADIPGLIEGAHEGVGIGDRFLGHVERCRALLHLVDGTSEHAGKAYKTVRAELAAYGNGLDEKPEIVALSKVDALSPELLKQQKERLKRAAKKTPLLLSAQSGQGVQEALRLLLSVVEEERGAEKAEEPRDAWRP.

The 159-residue stretch at 1–159 folds into the Obg domain; sequence MKFLDQAKVY…RWIWLRLKLI (159 aa). The 168-residue stretch at 160–327 folds into the OBG-type G domain; it reads ADAGLVGLPN…ALRLLLSVVE (168 aa). GTP-binding positions include 166 to 173, 191 to 195, 212 to 215, 279 to 282, and 308 to 310; these read GLPNAGKS, FTTLH, DIPG, SKVD, and SAQ. Residues serine 173 and threonine 193 each coordinate Mg(2+).

This sequence belongs to the TRAFAC class OBG-HflX-like GTPase superfamily. OBG GTPase family. In terms of assembly, monomer. Mg(2+) is required as a cofactor.

It localises to the cytoplasm. An essential GTPase which binds GTP, GDP and possibly (p)ppGpp with moderate affinity, with high nucleotide exchange rates and a fairly low GTP hydrolysis rate. Plays a role in control of the cell cycle, stress response, ribosome biogenesis and in those bacteria that undergo differentiation, in morphogenesis control. The chain is GTPase Obg from Xanthobacter autotrophicus (strain ATCC BAA-1158 / Py2).